Here is a 277-residue protein sequence, read N- to C-terminus: Isoprenyl transferase 1 (277 aa).

Positions 1-30 are disordered; the sequence is MAVRGILGRQRREYRTPEPHPSGARPPKLG. Residue aspartate 42 is part of the active site. A Mg(2+)-binding site is contributed by aspartate 42. Substrate contacts are provided by residues 43-46, tryptophan 47, arginine 55, histidine 59, and 87-89; these read GNGR and STE. Asparagine 90 acts as the Proton acceptor in catalysis. Substrate-binding positions include tryptophan 91, arginine 93, arginine 210, and 216 to 218; that span reads RTS. Glutamate 229 contributes to the Mg(2+) binding site.

The protein belongs to the UPP synthase family. In terms of assembly, homodimer. Requires Mg(2+) as cofactor.

Catalyzes the condensation of isopentenyl diphosphate (IPP) with allylic pyrophosphates generating different type of terpenoids. The polypeptide is Isoprenyl transferase 1 (Streptomyces coelicolor (strain ATCC BAA-471 / A3(2) / M145)).